A 105-amino-acid chain; its full sequence is Small ribosomal subunit protein uS10 (105 aa).

The protein belongs to the universal ribosomal protein uS10 family. As to quaternary structure, part of the 30S ribosomal subunit.

Its function is as follows. Involved in the binding of tRNA to the ribosomes. In Agathobacter rectalis (strain ATCC 33656 / DSM 3377 / JCM 17463 / KCTC 5835 / VPI 0990) (Eubacterium rectale), this protein is Small ribosomal subunit protein uS10.